The primary structure comprises 485 residues: D-alanine--D-alanyl carrier protein ligase (485 aa).

144–145 (TS) contacts ATP. Residue D189 coordinates D-alanine. ATP is bound at residue 284–289 (NTYGPT). V293 serves as a coordination point for D-alanine. D365 and K473 together coordinate ATP. K473 lines the D-alanine pocket.

Belongs to the ATP-dependent AMP-binding enzyme family. DltA subfamily.

It localises to the cytoplasm. The enzyme catalyses holo-[D-alanyl-carrier protein] + D-alanine + ATP = D-alanyl-[D-alanyl-carrier protein] + AMP + diphosphate. Its pathway is cell wall biogenesis; lipoteichoic acid biosynthesis. Catalyzes the first step in the D-alanylation of lipoteichoic acid (LTA), the activation of D-alanine and its transfer onto the D-alanyl carrier protein (Dcp) DltC. In an ATP-dependent two-step reaction, forms a high energy D-alanyl-AMP intermediate, followed by transfer of the D-alanyl residue as a thiol ester to the phosphopantheinyl prosthetic group of the Dcp. D-alanylation of LTA plays an important role in modulating the properties of the cell wall in Gram-positive bacteria, influencing the net charge of the cell wall. This Staphylococcus haemolyticus (strain JCSC1435) protein is D-alanine--D-alanyl carrier protein ligase.